The following is a 404-amino-acid chain: 1-deoxy-D-xylulose 5-phosphate reductoisomerase (404 aa).

NADPH is bound by residues threonine 5, glycine 6, serine 7, isoleucine 8, glycine 31, arginine 32, asparagine 33, and asparagine 121. Position 122 (lysine 122) interacts with 1-deoxy-D-xylulose 5-phosphate. An NADPH-binding site is contributed by glutamate 123. Residue aspartate 147 coordinates Mn(2+). 1-deoxy-D-xylulose 5-phosphate is bound by residues serine 148, glutamate 149, serine 185, and histidine 208. A Mn(2+)-binding site is contributed by glutamate 149. Glycine 214 is an NADPH binding site. Residues serine 221, asparagine 226, lysine 227, and glutamate 230 each contribute to the 1-deoxy-D-xylulose 5-phosphate site. Mn(2+) is bound at residue glutamate 230.

This sequence belongs to the DXR family. Requires Mg(2+) as cofactor. Mn(2+) is required as a cofactor.

The catalysed reaction is 2-C-methyl-D-erythritol 4-phosphate + NADP(+) = 1-deoxy-D-xylulose 5-phosphate + NADPH + H(+). It functions in the pathway isoprenoid biosynthesis; isopentenyl diphosphate biosynthesis via DXP pathway; isopentenyl diphosphate from 1-deoxy-D-xylulose 5-phosphate: step 1/6. Catalyzes the NADPH-dependent rearrangement and reduction of 1-deoxy-D-xylulose-5-phosphate (DXP) to 2-C-methyl-D-erythritol 4-phosphate (MEP). In Prochlorococcus marinus subsp. pastoris (strain CCMP1986 / NIES-2087 / MED4), this protein is 1-deoxy-D-xylulose 5-phosphate reductoisomerase.